An 85-amino-acid chain; its full sequence is MAKGQTLQDPFLNALRRERIPVSIYLVNGIKLQGQIESFDQFVVLLKNTVSQMVYKHAISTVVPARIPQNYLPQQAGEDMAEIED.

In terms of domain architecture, Sm spans 9 to 68; that stretch reads DPFLNALRRERIPVSIYLVNGIKLQGQIESFDQFVVLLKNTVSQMVYKHAISTVVPARIP.

It belongs to the Hfq family. In terms of assembly, homohexamer.

Functionally, RNA chaperone that binds small regulatory RNA (sRNAs) and mRNAs to facilitate mRNA translational regulation in response to envelope stress, environmental stress and changes in metabolite concentrations. Also binds with high specificity to tRNAs. This chain is RNA-binding protein Hfq, found in Idiomarina loihiensis (strain ATCC BAA-735 / DSM 15497 / L2-TR).